A 1023-amino-acid polypeptide reads, in one-letter code: 2-oxoglutarate dehydrogenase complex component E1 (1023 aa).

The N-terminal 40 residues, 1-40 (MFHLRTCAAKLRPLTASQTVKTFSQNRPAAARTFGQIRCY), are a transit peptide targeting the mitochondrion. Lys-74 bears the N6-succinyllysine mark. At Ser-100 the chain carries Phosphoserine. Ca(2+) is bound by residues His-143, Asp-156, and Asp-158. Residue Arg-312 participates in thiamine diphosphate binding. The residue at position 401 (Lys-401) is an N6-acetyllysine. Positions 411, 444, and 446 each coordinate thiamine diphosphate. 3 residues coordinate Mg(2+): Asp-411, Asn-444, and Ile-446. Lys-534 is covalently cross-linked (Glycyl lysine isopeptide (Lys-Gly) (interchain with G-Cter in ubiquitin)). An N6-succinyllysine modification is found at Lys-564. Gln-676 is a thiamine diphosphate binding site. The residue at position 970 (Lys-970) is an N6-acetyllysine.

This sequence belongs to the alpha-ketoglutarate dehydrogenase family. As to quaternary structure, homodimer. The 2-oxoglutarate dehydrogenase complex is composed of OGDH (2-oxoglutarate dehydrogenase; E1), DLST (dihydrolipoamide succinyltransferase; E2), DLD (dihydrolipoamide dehydrogenase; E3) and the assembly factor KGD4. It contains multiple copies of the three enzymatic components (E1, E2 and E3). In the nucleus, the 2-oxoglutarate dehydrogenase complex associates with KAT2A. Interacts with ABHD11; this interaction maintains the functional lipoylation of the 2-oxoglutarate dehydrogenase complex. It depends on thiamine diphosphate as a cofactor. Mg(2+) is required as a cofactor.

It is found in the mitochondrion. The protein resides in the nucleus. It carries out the reaction N(6)-[(R)-lipoyl]-L-lysyl-[protein] + 2-oxoglutarate + H(+) = N(6)-[(R)-S(8)-succinyldihydrolipoyl]-L-lysyl-[protein] + CO2. Its activity is regulated as follows. Calcium ions and ADP stimulate, whereas ATP and NADH reduce catalytic activity. 2-oxoglutarate dehydrogenase (E1o) component of the 2-oxoglutarate dehydrogenase complex (OGDHC). Participates in the first step, rate limiting for the overall conversion of 2-oxoglutarate to succinyl-CoA and CO(2) catalyzed by the whole OGDHC. Catalyzes the irreversible decarboxylation of 2-oxoglutarate (alpha-ketoglutarate) via the thiamine diphosphate (ThDP) cofactor and subsequent transfer of the decarboxylated acyl intermediate on an oxidized dihydrolipoyl group that is covalently amidated to the E2 enzyme (dihydrolipoyllysine-residue succinyltransferase or DLST). Plays a key role in the Krebs (citric acid) cycle, which is a common pathway for oxidation of fuel molecules, including carbohydrates, fatty acids, and amino acids. Can catalyze the decarboxylation of 2-oxoadipate in vitro, but at a much lower rate than 2-oxoglutarate. Mainly active in the mitochondrion. A fraction of the 2-oxoglutarate dehydrogenase complex also localizes in the nucleus and is required for lysine succinylation of histones: associates with KAT2A on chromatin and provides succinyl-CoA to histone succinyltransferase KAT2A. The protein is 2-oxoglutarate dehydrogenase complex component E1 of Bos taurus (Bovine).